The following is a 93-amino-acid chain: Putative septation protein SpoVG (93 aa).

Belongs to the SpoVG family.

In terms of biological role, could be involved in septation. In Alkaliphilus oremlandii (strain OhILAs) (Clostridium oremlandii (strain OhILAs)), this protein is Putative septation protein SpoVG.